A 105-amino-acid chain; its full sequence is uncharacterized protein (105 aa).

Residues 1–24 (MYWPCLVITPFTVGESFCLLLSLG) form the signal peptide.

This is an uncharacterized protein from Saccharomyces cerevisiae (strain ATCC 204508 / S288c) (Baker's yeast).